A 493-amino-acid polypeptide reads, in one-letter code: Amino acid permease 2 (493 aa).

Over 1 to 49 the chain is Cytoplasmic; sequence MGETAAANNHRHHHHHGHQVFDVASHDFVPPQPAFKCFDDDGRLKRTGT. The next 2 helical transmembrane spans lie at 50–70 and 71–91; these read VWTA…LSLA and WAIA…FSLV. The Cytoplasmic portion of the chain corresponds to 92–138; that stretch reads TLYSSTLLSDCYRTGDAVSGKRNYTYMDAVRSILGGFKFKICGLIQY. A helical membrane pass occupies residues 139–159; that stretch reads LNLFGIAIGYTIAASISMMAI. The Extracellular segment spans residues 160–175; it reads KRSNCFHKSGGKDPCH. A helical membrane pass occupies residues 176 to 196; sequence MSSNPYMIVFGVAEILLSQVP. Residues 197–200 are Cytoplasmic-facing; that stretch reads DFDQ. A helical membrane pass occupies residues 201–221; it reads IWWISIVAAVMSFTYSAIGLA. Residues 222–253 are Extracellular-facing; the sequence is LGIVQVAANGVFKGSLTGISIGTVTQTQKIWR. The chain crosses the membrane as a helical span at residues 254–274; that stretch reads TFQALGDIAFAYSYSVVLIEI. The Cytoplasmic portion of the chain corresponds to 275-293; sequence QDTVRSPPAESKTMKKATK. The chain crosses the membrane as a helical span at residues 294–314; sequence ISIAVTTIFYMLCGSMGYAAF. Residues 315 to 340 are Extracellular-facing; sequence GDAAPGNLLTGFGFYNPFWLLDIANA. The chain crosses the membrane as a helical span at residues 341-361; sequence AIVVHLVGAYQVFAQPIFAFI. Over 362 to 396 the chain is Cytoplasmic; the sequence is EKSVAERYPDNDFLSKEFEIRIPGFKSPYKVNVFR. The chain crosses the membrane as a helical span at residues 397 to 417; the sequence is MVYRSGFVVTTTVISMLMPFF. The Extracellular portion of the chain corresponds to 418 to 419; sequence ND. Residues 420–440 form a helical membrane-spanning segment; that stretch reads VVGILGALGFWPLTVYFPVEM. Over 441 to 458 the chain is Cytoplasmic; the sequence is YIKQRKVEKWSTRWVCLQ. A helical transmembrane segment spans residues 459-479; it reads MLSVACLVISVVAGVGSIAGV. The Extracellular segment spans residues 480–493; it reads MLDLKVYKPFKSTY.

This sequence belongs to the amino acid/polyamine transporter 2 family. Amino acid/auxin permease (AAAP) (TC 2.A.18.2) subfamily. In terms of tissue distribution, highly expressed in developing pods. Found in the vascular strands of siliques, cotyledons, leaves and roots, in the inner phloem of stems, and in the funiculi. Lower levels of expression in flowers. Not expressed in seeds.

The protein localises to the cell membrane. Its activity is regulated as follows. Inhibited by diethylpyrocarbonate (DEPC). Its function is as follows. Amino acid-proton symporter. Stereospecific transporter with a broad specificity for histidine, arginine, glutamate and neutral amino acids, favoring small amino acids such as alanine, asparagine and glutamine. Also accepts large aromatic residues such as phenlalanine or tyrosine. Has a much higher affinity for basic amino acids as compared with AAP1. May function in xylem-to-phloem transfer and in uptake of amino acids assimilated in the green silique tissue. The sequence is that of Amino acid permease 2 (AAP2) from Arabidopsis thaliana (Mouse-ear cress).